Reading from the N-terminus, the 278-residue chain is 4-deoxy-L-threo-5-hexosulose-uronate ketol-isomerase (278 aa).

Zn(2+)-binding residues include H196, H198, E203, and H245.

Belongs to the KduI family. Zn(2+) serves as cofactor.

It carries out the reaction 5-dehydro-4-deoxy-D-glucuronate = 3-deoxy-D-glycero-2,5-hexodiulosonate. The protein operates within glycan metabolism; pectin degradation; 2-dehydro-3-deoxy-D-gluconate from pectin: step 4/5. Catalyzes the isomerization of 5-dehydro-4-deoxy-D-glucuronate to 3-deoxy-D-glycero-2,5-hexodiulosonate. This chain is 4-deoxy-L-threo-5-hexosulose-uronate ketol-isomerase, found in Shigella sonnei (strain Ss046).